A 105-amino-acid chain; its full sequence is Venom metalloprotease inhibitor (105 aa).

An N-terminal signal peptide occupies residues 1-21 (MFRFVCVLFIALVVFCTTTSA). 5 disulfides stabilise this stretch: Cys26–Cys61, Cys35–Cys57, Cys39–Cys50, Cys43–Cys83, and Cys63–Cys77. The TIL domain maps to 26 to 83 (CNRPNEEYRCGSACQTTCATLGQRCPIMNIRCNDACYCKEGYARYGDDTGMCVSISQC).

Belongs to the serine protease inhibitor-like (TIL domain-containing) family. In terms of tissue distribution, expressed by the venom gland.

The protein localises to the secreted. In terms of biological role, inhibits metalloprotease (human MMP3), trypsin, chymotrypsin, plasmin and microbial serine protease (proteinase K). Exhibits antifibrinolytic activity by binding plasmin and inhibiting it. Does not inhibit elastase, thrombin or microbial serine protease (subtilisin A). This is Venom metalloprotease inhibitor from Bombus ignitus (Bumblebee).